A 760-amino-acid chain; its full sequence is uncharacterized protein (760 aa).

Residues 578-587 show a composition bias toward basic residues; sequence RNRKQSKLRI. The interval 578–604 is disordered; the sequence is RNRKQSKLRISKQQEIQPQKEESVKKE. The span at 595-604 shows a compositional bias: basic and acidic residues; it reads PQKEESVKKE.

It localises to the mitochondrion. This is an uncharacterized protein from Dictyostelium citrinum (Slime mold).